Reading from the N-terminus, the 405-residue chain is NADH-quinone oxidoreductase subunit D (405 aa).

It belongs to the complex I 49 kDa subunit family. As to quaternary structure, NDH-1 is composed of 14 different subunits. Subunits NuoB, C, D, E, F, and G constitute the peripheral sector of the complex.

The protein localises to the cell inner membrane. The enzyme catalyses a quinone + NADH + 5 H(+)(in) = a quinol + NAD(+) + 4 H(+)(out). In terms of biological role, NDH-1 shuttles electrons from NADH, via FMN and iron-sulfur (Fe-S) centers, to quinones in the respiratory chain. The immediate electron acceptor for the enzyme in this species is believed to be ubiquinone. Couples the redox reaction to proton translocation (for every two electrons transferred, four hydrogen ions are translocated across the cytoplasmic membrane), and thus conserves the redox energy in a proton gradient. The chain is NADH-quinone oxidoreductase subunit D from Leptospira interrogans serogroup Icterohaemorrhagiae serovar copenhageni (strain Fiocruz L1-130).